A 622-amino-acid polypeptide reads, in one-letter code: MPHLTDDDIYYWRQGTHTHSYERMGAHPNQRGTWFGVWAPNADRVEVTGDFNDWRFGADVLDRREGGLWEGYVRGAQPGDKYKYHLRAGGEWFDRTDPYAFRMEPPAQNTYEGLSALITDLDTYTWGDDAWMTTREGPSGIDGPLSIYEVHLGSWRHEEHGASLSYREVAEPLADHVQNLGFTHVEFLPLAEHPYYGSWGYQILGYYAPTFRYGDPEGLMHLIDTLHQRGIGVIMDWVPGHFATDPQGLTYFDGSHLFEYEDPLMREHPDWGTRVFDFGKNGVRNFLLSNALFWMDKYHVDGLRVDAVASMLYRDYSREGDWSPNVHGGRENLGAISLLQDTNEHVYDEYPEAIMLAEESTAWPGVTTPTEHGGLGFLYKWNMGWMHDTLEYASKEPVHRKHHHGDLTWTLSWAFSENYTLPLSHDEVVHGKNSLWSKMPGDDWQKAANLRLLYAHMFGHPGKKLLFMGGEFGQHREWDHDRALEWDLADEPLHEGLMEWLGDLNHLYQNAPALWNDQEDGFEWIAYDDRENSVLTYRRLNGDRSLVFVLNFTPVVREDYRIGATGDGRWHERLNSDSDVYGGSNVGNRGAVHSDPVEKHGHSHSLSLTLPPLGALVLEPAE.

Aspartate 306 (nucleophile) is an active-site residue. The active-site Proton donor is glutamate 358. A disordered region spans residues 581–606 (YGGSNVGNRGAVHSDPVEKHGHSHSL).

It belongs to the glycosyl hydrolase 13 family. GlgB subfamily. In terms of assembly, monomer.

The catalysed reaction is Transfers a segment of a (1-&gt;4)-alpha-D-glucan chain to a primary hydroxy group in a similar glucan chain.. Its pathway is glycan biosynthesis; glycogen biosynthesis. Its function is as follows. Catalyzes the formation of the alpha-1,6-glucosidic linkages in glycogen by scission of a 1,4-alpha-linked oligosaccharide from growing alpha-1,4-glucan chains and the subsequent attachment of the oligosaccharide to the alpha-1,6 position. This Salinibacter ruber (strain DSM 13855 / M31) protein is 1,4-alpha-glucan branching enzyme GlgB.